The following is an 85-amino-acid chain: Phycobilisome 9.7 kDa linker polypeptide, phycocyanin-associated, rod (85 aa).

One can recognise a CpcD-like domain in the interval 16-74 (NRVFVYEVEGLRQNEQTDNNRYQIRNSSTIEIQVPYSRMNEEDRRITRLGGRIVNIRPA).

Belongs to the phycobilisome linker protein family.

It localises to the cellular thylakoid membrane. Its function is as follows. Rod linker protein, associated with phycocyanin. Linker polypeptides determine the state of aggregation and the location of the disk-shaped phycobiliprotein units within the phycobilisome and modulate their spectroscopic properties in order to mediate a directed and optimal energy transfer. The chain is Phycobilisome 9.7 kDa linker polypeptide, phycocyanin-associated, rod (cpcD2) from Microchaete diplosiphon (Fremyella diplosiphon).